The following is a 400-amino-acid chain: Subtilisin-like protease 2 (400 aa).

A signal peptide spans 1–20 (MKFSQSLIALAACFLPLIAA). A propeptide spanning residues 21–119 (APEEAQHAKI…IERDGKVQAN (99 aa)) is cleaved from the precursor. The Inhibitor I9 domain maps to 42–117 (SYIVVFNKGV…AWIERDGKVQ (76 aa)). N-linked (GlcNAc...) asparagine glycosylation is present at N82. The Peptidase S8 domain occupies 128–400 (TWGLGRISHK…NLIAYNGNGA (273 aa)). Catalysis depends on charge relay system residues D160, H192, and S345.

The protein belongs to the peptidase S8 family.

The protein localises to the secreted. Potently inhibited by the serine peptidase inhibitor chymostatin. Also inhibited by antpain and PMSF. Major secreted subtilisin-like serine endopeptidase. Preferentially cleaves substrates containing hydrophobic residues at P4, positively charged residues at P3, small or flexible residues at P2, and large, bulky residues at P1. Mediates the degradation of collagen, the major structural protein in the mammalian host. Degrades the nonhelical regions of collagen that function in the cross-linking of the helical components. May function as virulence factor involved in epidermal wing necrosis observed in white nose syndrome (WNS) in bats. The polypeptide is Subtilisin-like protease 2 (Pseudogymnoascus destructans (strain ATCC MYA-4855 / 20631-21) (Bat white-nose syndrome fungus)).